Consider the following 372-residue polypeptide: E3 ubiquitin-protein ligase RNF34 (372 aa).

An FYVE-type zinc finger spans residues 56 to 107 (EGPNIVCKACGLSFSVFRKKHVCCDCKKDFCSVCSVLQENLRRCSTCHLLQE). Positions 115 to 134 (LMRLKVKDLRQYLILRNIPT) constitute an SAP 1 domain. Ser169 is subject to Phosphoserine. Residues 194–252 (QGELMDGDQTSRSGVPAQVQSEITSANTEDDDDDDDEDDDDEEENAEDQNPGLSKERVR) form a disordered region. The span at 201-220 (DQTSRSGVPAQVQSEITSAN) shows a compositional bias: polar residues. The segment covering 221-240 (TEDDDDDDDEDDDDEEENAE) has biased composition (acidic residues). Phosphoserine occurs at positions 254 and 256. Residues 264–278 (VEGMSVRQLKEILAR) enclose the SAP 2 domain. The RING-type zinc finger occupies 325-360 (CRICMDAVIDCVLLECGHMVTCTKCGKRMSECPICR).

As to quaternary structure, interacts with CASP8 and CASP10. Interacts with p53/TP53; involved in p53/TP53 ubiquitination. Interacts (via RING-type zinc finger) with MDM2; the interaction stabilizes MDM2. Interacts (via RING-type zinc finger) with PPARGC1A. Interacts with NOD1. In terms of processing, autoubiquitinated (in vitro). Post-translationally, proteolytically cleaved by caspases upon induction of apoptosis by TNF.

It is found in the cell membrane. The protein localises to the endomembrane system. The protein resides in the nucleus. Its subcellular location is the nucleus speckle. It localises to the cytoplasm. It is found in the cytosol. The enzyme catalyses S-ubiquitinyl-[E2 ubiquitin-conjugating enzyme]-L-cysteine + [acceptor protein]-L-lysine = [E2 ubiquitin-conjugating enzyme]-L-cysteine + N(6)-ubiquitinyl-[acceptor protein]-L-lysine.. Its pathway is protein modification; protein ubiquitination. E3 ubiquitin-protein ligase that regulates several biological processes through the ubiquitin-mediated proteasomal degradation of various target proteins. Ubiquitinates the caspases CASP8 and CASP10, promoting their proteasomal degradation, to negatively regulate cell death downstream of death domain receptors in the extrinsic pathway of apoptosis. May mediate 'Lys-48'-linked polyubiquitination of RIPK1 and its subsequent proteasomal degradation thereby indirectly regulating the tumor necrosis factor-mediated signaling pathway. Negatively regulates p53/TP53 through its direct ubiquitination and targeting to proteasomal degradation. Indirectly, may also negatively regulate p53/TP53 through ubiquitination and degradation of SFN. Mediates PPARGC1A proteasomal degradation probably through ubiquitination thereby indirectly regulating the metabolism of brown fat cells. Possibly involved in innate immunity, through 'Lys-48'-linked polyubiquitination of NOD1 and its subsequent proteasomal degradation. This Pongo abelii (Sumatran orangutan) protein is E3 ubiquitin-protein ligase RNF34 (RNF34).